Here is a 117-residue protein sequence, read N- to C-terminus: MKVFLGLLLGYSTILILTYQSPATQWCFYEISLKIPNHHSMECSYPRLYKHFMFMKKWRDKNWSIIIRYYCFYLVFSFAFAGCIAFAICKNLRLCTTMKLLMLLSILVLLSQPILNN.

The chain crosses the membrane as a helical span at residues 3–23; that stretch reads VFLGLLLGYSTILILTYQSPA. The N-linked (GlcNAc...) asparagine; by host glycan is linked to N62. 2 consecutive transmembrane segments (helical) span residues 69 to 89 and 94 to 114; these read YYCF…FAIC and LCTT…SQPI.

The protein belongs to the asfivirus MGF 110 family.

Its subcellular location is the host membrane. In terms of biological role, plays a role in virus cell tropism, and may be required for efficient virus replication in macrophages. This chain is Protein MGF 110-11L, found in African swine fever virus (isolate Warthog/Namibia/Wart80/1980) (ASFV).